A 376-amino-acid chain; its full sequence is DNA double-strand break repair protein Mre11 (376 aa).

Positions 5, 7, 46, and 81 each coordinate Mn(2+). H82 (proton donor) is an active-site residue. Residues H159, H189, and H191 each contribute to the Mn(2+) site.

This sequence belongs to the MRE11/RAD32 family. Homodimer. Forms a heterotetramer composed of two Mre11 subunits and two Rad50 subunits. Mn(2+) is required as a cofactor.

With respect to regulation, nuclease activity is regulated by Rad50. Its function is as follows. Part of the Rad50/Mre11 complex, which is involved in the early steps of DNA double-strand break (DSB) repair. The complex may facilitate opening of the processed DNA ends to aid in the recruitment of HerA and NurA. Mre11 binds to DSB ends and has both double-stranded 3'-5' exonuclease activity and single-stranded endonuclease activity. This chain is DNA double-strand break repair protein Mre11, found in Thermoplasma acidophilum (strain ATCC 25905 / DSM 1728 / JCM 9062 / NBRC 15155 / AMRC-C165).